Reading from the N-terminus, the 509-residue chain is Activin receptor type-1 (509 aa).

The signal sequence occupies residues 1–20 (MVDGAMILSVLMMMALPSPS). Topologically, residues 21 to 123 (MEDEEPKVNP…FPGSQNFHLE (103 aa)) are extracellular. A glycan (N-linked (GlcNAc...) asparagine) is linked at Asn102. A helical membrane pass occupies residues 124-146 (VGLIILSVVFAVCLFACILGVAL). The Cytoplasmic segment spans residues 147–509 (RKFKRRNQER…NSLDKLKTDC (363 aa)). The region spanning 178–207 (STLAELLDHSCTSGSGSGLPFLVQRTVARQ) is the GS domain. One can recognise a Protein kinase domain in the interval 208-502 (ITLLECVGKG…KTLTKIDNSL (295 aa)). Residues 214–222 (VGKGRYGEV) and Lys235 contribute to the ATP site. Asp336 serves as the catalytic Proton acceptor. The residue at position 501 (Ser501) is a Phosphoserine.

This sequence belongs to the protein kinase superfamily. TKL Ser/Thr protein kinase family. TGFB receptor subfamily. In terms of assembly, interacts with FKBP1A. Interacts with FCHO1. Interacts with CLU. Interacts with type II receptors AMHR2 and ACVR2A. Interacts with BMP7. Interacts with GDF2/BMP9. Interacts with BMP6 (when glycosylated); the interaction may induce HAMP expression. Interacts with TSC22D1/TSC-22. Mg(2+) is required as a cofactor. Mn(2+) serves as cofactor. As to expression, urogenital ridge, testis, ovary, brain and lungs.

It localises to the membrane. It catalyses the reaction L-threonyl-[receptor-protein] + ATP = O-phospho-L-threonyl-[receptor-protein] + ADP + H(+). The enzyme catalyses L-seryl-[receptor-protein] + ATP = O-phospho-L-seryl-[receptor-protein] + ADP + H(+). Its function is as follows. Bone morphogenetic protein (BMP) type I receptor that is involved in a wide variety of biological processes, including bone, heart, cartilage, nervous, and reproductive system development and regulation. As a type I receptor, forms heterotetrameric receptor complexes with the type II receptors AMHR2, ACVR2A ors ACVR2B. Upon binding of ligands such as BMP7 or GDF2/BMP9 to the heteromeric complexes, type II receptors transphosphorylate ACVR1 intracellular domain. In turn, ACVR1 kinase domain is activated and subsequently phosphorylates SMAD1/5/8 proteins that transduce the signal. In addition to its role in mediating BMP pathway-specific signaling, suppresses TGFbeta/activin pathway signaling by interfering with the binding of activin to its type II receptor. Besides canonical SMAD signaling, can activate non-canonical pathways such as p38 mitogen-activated protein kinases/MAPKs. May promote the expression of HAMP, potentially via its interaction with BMP6. This Rattus norvegicus (Rat) protein is Activin receptor type-1 (Acvr1).